A 563-amino-acid chain; its full sequence is Beta-catenin-like protein 1 (563 aa).

N-acetylmethionine is present on M1. The interval 1 to 49 (MDVGELLSYQPNRGTKRPRDDEEEEQKMRRKQTGTRERGRYREEEMTVV) is disordered. The Nuclear localization signal motif lies at 16 to 33 (KRPRDDEEEEQKMRRKQT). Residues 34–45 (GTRERGRYREEE) are compositionally biased toward basic and acidic residues. HEAT repeat units lie at residues 79-129 (ESSV…VVAT) and 134-176 (YHLL…TLHE). Position 91 is an N6-acetyllysine (K91). A Nuclear export signal (NES) motif is present at residues 130-140 (MPDLYHLLVEL). ARM repeat units follow at residues 178–228 (EEGA…MAEF), 229–273 (RPEM…LQDN), 274–323 (DENR…CLML), 325–363 (SNRE…AMIG), and 364–417 (PEGT…LLRN). S389 bears the Phosphoserine mark. Residues 476 to 540 (DTEEEFYLRR…HIIKEYAENI (65 aa)) are a coiled coil. Residue S545 is modified to Phosphoserine.

Component of the PRP19-CDC5L splicing complex composed of a core complex comprising a homotetramer of PRPF19, CDC5L, PLRG1 and BCAS2, and at least three less stably associated proteins CTNNBL1, CWC15 and HSPA8. Interacts directly with CWC15 and CDC5L in the complex. Interacts with AICDA; the interaction is important for the antibody diversification activity of AICDA. Interacts with PRPF31 (via its NLS). Interacts (via its N-terminal NLS) with KPNA1 and KPNA2. Widely expressed with highest levels in skeletal muscle, placenta, heart, spleen, testis and thyroid.

It localises to the nucleus. The protein localises to the cytoplasm. In terms of biological role, component of the PRP19-CDC5L complex that forms an integral part of the spliceosome and is required for activating pre-mRNA splicing. Participates in AID/AICDA-mediated somatic hypermutation (SHM) and class-switch recombination (CSR), 2 processes resulting in the production of high-affinity, mutated isotype-switched antibodies. The sequence is that of Beta-catenin-like protein 1 (CTNNBL1) from Homo sapiens (Human).